The primary structure comprises 337 residues: 4-hydroxythreonine-4-phosphate dehydrogenase (337 aa).

Substrate is bound by residues His-137 and Thr-138. Residues His-167, His-212, and His-267 each coordinate a divalent metal cation. Lys-275, Asn-284, and Arg-293 together coordinate substrate.

Belongs to the PdxA family. Homodimer. The cofactor is Zn(2+). It depends on Mg(2+) as a cofactor. Co(2+) is required as a cofactor.

The protein localises to the cytoplasm. The catalysed reaction is 4-(phosphooxy)-L-threonine + NAD(+) = 3-amino-2-oxopropyl phosphate + CO2 + NADH. It participates in cofactor biosynthesis; pyridoxine 5'-phosphate biosynthesis; pyridoxine 5'-phosphate from D-erythrose 4-phosphate: step 4/5. Its function is as follows. Catalyzes the NAD(P)-dependent oxidation of 4-(phosphooxy)-L-threonine (HTP) into 2-amino-3-oxo-4-(phosphooxy)butyric acid which spontaneously decarboxylates to form 3-amino-2-oxopropyl phosphate (AHAP). This Ectopseudomonas mendocina (strain ymp) (Pseudomonas mendocina) protein is 4-hydroxythreonine-4-phosphate dehydrogenase.